The chain runs to 189 residues: UPF0312 protein VIBHAR_05924 (189 aa).

The signal sequence occupies residues 1–22 (MKKSLFATGLAIAIALPFGANA).

It belongs to the UPF0312 family. Type 1 subfamily.

Its subcellular location is the periplasm. This Vibrio campbellii (strain ATCC BAA-1116) protein is UPF0312 protein VIBHAR_05924.